Reading from the N-terminus, the 312-residue chain is Ribonuclease Z (312 aa).

Residues His-62, His-64, Asp-66, His-67, His-139, Asp-210, and His-268 each coordinate Zn(2+). Catalysis depends on Asp-66, which acts as the Proton acceptor.

The protein belongs to the RNase Z family. In terms of assembly, homodimer. The cofactor is Zn(2+).

The catalysed reaction is Endonucleolytic cleavage of RNA, removing extra 3' nucleotides from tRNA precursor, generating 3' termini of tRNAs. A 3'-hydroxy group is left at the tRNA terminus and a 5'-phosphoryl group is left at the trailer molecule.. Functionally, zinc phosphodiesterase, which displays some tRNA 3'-processing endonuclease activity. Probably involved in tRNA maturation, by removing a 3'-trailer from precursor tRNA. This chain is Ribonuclease Z, found in Crocosphaera subtropica (strain ATCC 51142 / BH68) (Cyanothece sp. (strain ATCC 51142)).